A 500-amino-acid polypeptide reads, in one-letter code: Pyruvate kinase 1 (500 aa).

Serine 2 carries the post-translational modification N-acetylserine. Phosphoserine is present on residues serine 9 and serine 16. Residue threonine 31 is modified to Phosphothreonine. A substrate-binding site is contributed by arginine 49. K(+)-binding residues include asparagine 51 and serine 53. 51-54 (NFSH) provides a ligand contact to ATP. Position 70 is a phosphoserine (serine 70). The K(+) site is built by aspartate 84 and threonine 85. Arginine 91 serves as a coordination point for ATP. Residues lysine 119, lysine 124, lysine 161, lysine 164, and lysine 166 each participate in a glycyl lysine isopeptide (Lys-Gly) (interchain with G-Cter in URM1) cross-link. Residue lysine 177 participates in ATP binding. Phosphothreonine is present on threonine 184. Lysine 204 is covalently cross-linked (Glycyl lysine isopeptide (Lys-Gly) (interchain with G-Cter in ubiquitin)). At serine 213 the chain carries Phosphoserine. A substrate-binding site is contributed by lysine 240. Glutamate 242 provides a ligand contact to Mn(2+). Lysine 255 is covalently cross-linked (Glycyl lysine isopeptide (Lys-Gly) (interchain with G-Cter in ubiquitin)). The substrate site is built by glycine 265 and aspartate 266. Residue aspartate 266 coordinates Mn(2+). Lysine 292 participates in a covalent cross-link: Glycyl lysine isopeptide (Lys-Gly) (interchain with G-Cter in URM1). Substrate is bound at residue threonine 298. Position 316 is a phosphoserine (serine 316). Lysine 394 is covalently cross-linked (Glycyl lysine isopeptide (Lys-Gly) (interchain with G-Cter in URM1)). 402-407 (STSGTT) contributes to the beta-D-fructose 1,6-bisphosphate binding site. Cysteine 418 carries the post-translational modification Cysteine persulfide. Lysine 446 is covalently cross-linked (Glycyl lysine isopeptide (Lys-Gly) (interchain with G-Cter in ubiquitin); alternate). Residue lysine 446 forms a Glycyl lysine isopeptide (Lys-Gly) (interchain with G-Cter in URM1); alternate linkage. Serine 450 carries the post-translational modification Phosphoserine. Positions 452 and 459 each coordinate beta-D-fructose 1,6-bisphosphate. The residue at position 478 (threonine 478) is a Phosphothreonine. A beta-D-fructose 1,6-bisphosphate-binding site is contributed by glycine 484.

This sequence belongs to the pyruvate kinase family. Homotetramer. Requires Mg(2+) as cofactor. K(+) serves as cofactor. In terms of processing, conjugated to URM1, a ubiquitin-like protein, in response to oxidative stresses. The attachment of URM1 to lysine residues exclusively depends on the presence of a peroxidatic cysteine in the target protein, with low specificity for the particular residue, motif, or structural context at which urmylation can occur. The URM1-conjugation reaction is mechanistically and directly coupled to the process of cysteine persulfidation, transfering the sulfur atom of the URM1 thiocarboxyl group to redox-active cysteine residues in the target protein if it is exposed to oxidative conditions. Post-translationally, persulfidated on specific redox-active cysteine residues. Persulfidation (also called protein S-sulfhydration) may provide a molecular mechanism that enables cells to protect vulnerable cysteine residues from reactive oxygen species (ROS) under stress conditions.

It carries out the reaction pyruvate + ATP = phosphoenolpyruvate + ADP + H(+). Its pathway is carbohydrate degradation; glycolysis; pyruvate from D-glyceraldehyde 3-phosphate: step 5/5. With respect to regulation, the activity is regulated by glucose levels. Activated by fructose-1,6-bisphosphate. In Saccharomyces cerevisiae (strain ATCC 204508 / S288c) (Baker's yeast), this protein is Pyruvate kinase 1 (CDC19).